We begin with the raw amino-acid sequence, 288 residues long: Phosphatidylserine decarboxylase proenzyme (288 aa).

Catalysis depends on charge relay system; for autoendoproteolytic cleavage activity residues Asp-92, His-149, and Ser-254. Residue Ser-254 is the Schiff-base intermediate with substrate; via pyruvic acid; for decarboxylase activity of the active site. Position 254 is a pyruvic acid (Ser); by autocatalysis (Ser-254).

This sequence belongs to the phosphatidylserine decarboxylase family. PSD-B subfamily. Prokaryotic type I sub-subfamily. In terms of assembly, heterodimer of a large membrane-associated beta subunit and a small pyruvoyl-containing alpha subunit. It depends on pyruvate as a cofactor. In terms of processing, is synthesized initially as an inactive proenzyme. Formation of the active enzyme involves a self-maturation process in which the active site pyruvoyl group is generated from an internal serine residue via an autocatalytic post-translational modification. Two non-identical subunits are generated from the proenzyme in this reaction, and the pyruvate is formed at the N-terminus of the alpha chain, which is derived from the carboxyl end of the proenzyme. The autoendoproteolytic cleavage occurs by a canonical serine protease mechanism, in which the side chain hydroxyl group of the serine supplies its oxygen atom to form the C-terminus of the beta chain, while the remainder of the serine residue undergoes an oxidative deamination to produce ammonia and the pyruvoyl prosthetic group on the alpha chain. During this reaction, the Ser that is part of the protease active site of the proenzyme becomes the pyruvoyl prosthetic group, which constitutes an essential element of the active site of the mature decarboxylase.

The protein resides in the cell membrane. The catalysed reaction is a 1,2-diacyl-sn-glycero-3-phospho-L-serine + H(+) = a 1,2-diacyl-sn-glycero-3-phosphoethanolamine + CO2. Its pathway is phospholipid metabolism; phosphatidylethanolamine biosynthesis; phosphatidylethanolamine from CDP-diacylglycerol: step 2/2. In terms of biological role, catalyzes the formation of phosphatidylethanolamine (PtdEtn) from phosphatidylserine (PtdSer). The chain is Phosphatidylserine decarboxylase proenzyme from Bordetella petrii (strain ATCC BAA-461 / DSM 12804 / CCUG 43448).